An 888-amino-acid chain; its full sequence is Kinesin-like protein KIF20A (888 aa).

N-acetylserine is present on Ser2. Residues Ser7, Ser14, and Ser21 each carry the phosphoserine modification. The Kinesin motor domain maps to 63–506 (KVKVYLRVRP…AKFSAIASQL (444 aa)). Position 159–166 (159–166 (GVTNSGKT)) interacts with ATP. Ser527 carries the phosphoserine; by PLK1 modification. Phosphoserine is present on Ser531. 2 coiled-coil regions span residues 559-587 (KEEL…EVQL) and 630-760 (ESLT…ERAC). Residues Ser667, Ser683, and Ser823 each carry the phosphoserine modification. Positions 761–888 (CHNTGAGKLR…LKSGPFGKKY (128 aa)) are globular. The segment at 823-863 (STKKRLGANQENQQPNQQPPGKKPFLRNLLPRTPTCQSSTD) is disordered. Position 855 is a phosphothreonine (Thr855). Phosphoserine is present on residues Ser865, Ser876, and Ser881.

The protein belongs to the TRAFAC class myosin-kinesin ATPase superfamily. Kinesin family. Phosphorylated by PLK1 at Ser-527 during mitosis, creating a docking site for PLK1 and recruiting PLK1 at central spindle.

It is found in the golgi apparatus. Its subcellular location is the cytoplasm. It localises to the cytoskeleton. The protein localises to the spindle. Its function is as follows. Mitotic kinesin required for chromosome passenger complex (CPC)-mediated cytokinesis. Following phosphorylation by PLK1, involved in recruitment of PLK1 to the central spindle. Interacts with guanosine triphosphate (GTP)-bound forms of RAB6A and RAB6B. May act as a motor required for the retrograde RAB6 regulated transport of Golgi membranes and associated vesicles along microtubules. Has a microtubule plus end-directed motility. The polypeptide is Kinesin-like protein KIF20A (KIF20A) (Bos taurus (Bovine)).